Consider the following 55-residue polypeptide: Rubredoxin-2 (55 aa).

A Rubredoxin-like domain is found at 1-54 (MRKWQCVVCGFIYDEALGLPEEGIPAGTRWEDIPADWVCPDCGVGKIDFEMIEI). 4 residues coordinate Fe cation: cysteine 6, cysteine 9, cysteine 39, and cysteine 42.

The protein belongs to the rubredoxin family. It depends on Fe(3+) as a cofactor.

The protein resides in the cytoplasm. It functions in the pathway hydrocarbon metabolism; alkane degradation. In terms of biological role, involved in the hydrocarbon hydroxylating system, which transfers electrons from NADH to rubredoxin reductase and then through rubredoxin to alkane 1 monooxygenase. This chain is Rubredoxin-2 (rubA2), found in Pseudomonas aeruginosa (strain ATCC 15692 / DSM 22644 / CIP 104116 / JCM 14847 / LMG 12228 / 1C / PRS 101 / PAO1).